The following is a 1845-amino-acid chain: Histone-lysine N-methyltransferase, H3 lysine-79 specific (1845 aa).

Residues 1–44 are compositionally biased toward polar residues; it reads MSTNSTPRKQKLSNSKSLQNSPISPTVKKTNSFPLGNNIPTNIN. Disordered regions lie at residues 1-67, 83-306, 450-470, 486-571, 585-681, 741-767, 862-881, and 963-1102; these read MSTN…NGIG, PPLP…NKWT, SHDI…NKNK, QKLK…TERK, RKER…NDSY, GETF…KKIE, QTTK…AETE, and KDNP…SNSL. Composition is skewed to low complexity over residues 52–67, 90–162, 191–226, and 239–263; these read NNSN…NGIG, SSSS…QQEP, PSTP…SNNS, and NNNN…NNNN. Residues 268–280 show a composition bias toward acidic residues; it reads VIDDDDDDDDDEG. A compositionally biased stretch (polar residues) spans 282 to 294; it reads SIKSTHTSTQSTP. Over residues 295–304 the composition is skewed to basic and acidic residues; it reads IRDRRQRDNK. Positions 453-464 are enriched in low complexity; the sequence is INNNNNNNNNNK. Residues 585–679 show a composition bias toward basic and acidic residues; that stretch reads RKERERKERK…IEKERREKND (95 aa). The interval 625–639 is required for interaction with nucleosomes and DNA; the sequence is KKKEKEKEKEKEKEK. Low complexity-rich tracts occupy residues 750–763, 862–877, 972–1011, and 1020–1067; these read NNNN…NNNN, QTTK…TTTT, NNNR…RNNN, and NNNN…NNTI. The segment covering 1069-1080 has biased composition (basic and acidic residues); sequence KKIETIKKDINK. Residues 1084-1102 show a composition bias toward low complexity; sequence KTTTTTSSSSSSTSSSNSL. The DOT1 domain occupies 1125-1446; the sequence is FDVGIGVPVT…KDSDIVTDQT (322 aa). S-adenosyl-L-methionine is bound by residues 1251-1254, 1274-1283, and E1300; these read YGEA and FCDIGCGIGN. 5 disordered regions span residues 1463–1559, 1610–1661, 1735–1762, 1772–1791, and 1799–1845; these read LQLF…NKPI, RISP…SSND, HQKS…KKEQ, NYNN…NHNN, and TDLI…DNNK. Low complexity-rich tracts occupy residues 1467 to 1522, 1541 to 1556, and 1610 to 1642; these read SSSS…TPNS, NNNN…NSNN, and RISP…SSSD. Residues 1643 to 1656 show a composition bias toward acidic residues; the sequence is NENDDDNGDDEDDS. Residues 1745 to 1759 are compositionally biased toward basic residues; it reads RLSRKQKKLAKKNKK. Composition is skewed to low complexity over residues 1799 to 1817 and 1835 to 1845; these read TDLI…INND and KDYNNINDNNK.

Belongs to the class I-like SAM-binding methyltransferase superfamily. DOT1 family.

Its subcellular location is the nucleus. It catalyses the reaction L-lysyl(79)-[histone H3] + 3 S-adenosyl-L-methionine = N(6),N(6),N(6)-trimethyl-L-lysyl(79)-[histone H3] + 3 S-adenosyl-L-homocysteine + 3 H(+). Its function is as follows. Histone methyltransferase that specifically methylates histone H3 to form H3K79me. This methylation is required for telomere silencing, correct growth and development, and for resistance to DNA damage induced by UV LIGHT. This is Histone-lysine N-methyltransferase, H3 lysine-79 specific from Dictyostelium discoideum (Social amoeba).